A 723-amino-acid polypeptide reads, in one-letter code: Probable dipeptidyl-peptidase 5 (723 aa).

An N-terminal signal peptide occupies residues 1-19 (MAALRWLSAVVAVSTTVLA). N79, N97, N154, N255, N381, and N451 each carry an N-linked (GlcNAc...) asparagine glycan. Residue S561 is the Charge relay system of the active site. The N-linked (GlcNAc...) asparagine glycan is linked to N608. Active-site charge relay system residues include D644 and H676.

This sequence belongs to the peptidase S9C family.

The protein localises to the secreted. Extracellular dipeptidyl-peptidase which removes N-terminal dipeptides sequentially from polypeptides having unsubstituted N-termini. The protein is Probable dipeptidyl-peptidase 5 (dpp5) of Aspergillus terreus (strain NIH 2624 / FGSC A1156).